A 217-amino-acid chain; its full sequence is Flagellar L-ring protein 2 (217 aa).

Residues 1–15 form the signal peptide; sequence MRILLALTWLAWLGA. Cys-16 is lipidated: N-palmitoyl cysteine. Cys-16 is lipidated: S-diacylglycerol cysteine.

It belongs to the FlgH family. In terms of assembly, the basal body constitutes a major portion of the flagellar organelle and consists of four rings (L,P,S, and M) mounted on a central rod.

The protein resides in the cell outer membrane. It is found in the bacterial flagellum basal body. Assembles around the rod to form the L-ring and probably protects the motor/basal body from shearing forces during rotation. In Burkholderia thailandensis (strain ATCC 700388 / DSM 13276 / CCUG 48851 / CIP 106301 / E264), this protein is Flagellar L-ring protein 2.